The following is a 357-amino-acid chain: Tetraacyldisaccharide 4'-kinase (357 aa).

Position 49 to 56 (49 to 56) interacts with ATP; the sequence is TIGGTGKT.

Belongs to the LpxK family.

The enzyme catalyses a lipid A disaccharide + ATP = a lipid IVA + ADP + H(+). It participates in glycolipid biosynthesis; lipid IV(A) biosynthesis; lipid IV(A) from (3R)-3-hydroxytetradecanoyl-[acyl-carrier-protein] and UDP-N-acetyl-alpha-D-glucosamine: step 6/6. In terms of biological role, transfers the gamma-phosphate of ATP to the 4'-position of a tetraacyldisaccharide 1-phosphate intermediate (termed DS-1-P) to form tetraacyldisaccharide 1,4'-bis-phosphate (lipid IVA). The polypeptide is Tetraacyldisaccharide 4'-kinase (Porphyromonas gingivalis (strain ATCC 33277 / DSM 20709 / CIP 103683 / JCM 12257 / NCTC 11834 / 2561)).